Here is a 375-residue protein sequence, read N- to C-terminus: Adiponectin receptor protein 1 (375 aa).

Residues 1–60 are disordered; that stretch reads MSSHKGSAGAQGNGAPSGNREADTVELAELGPLLEEKGKRAASSPAKAEEDQACPVPQEE. Over 1–136 the chain is Cytoplasmic; sequence MSSHKGSAGA…SIFRIHTETG (136 aa). A helical transmembrane segment spans residues 137–157; the sequence is NIWTHLLGFVLFLFLGILTML. The Extracellular portion of the chain corresponds to 158–170; sequence RPNMYFMAPLQEK. A helical transmembrane segment spans residues 171 to 191; it reads VVFGMFFLGAVLCLSFSWLFH. Residue H191 participates in Zn(2+) binding. The Cytoplasmic portion of the chain corresponds to 192-203; it reads TVYCHSEKVSRT. A helical transmembrane segment spans residues 204-224; the sequence is FSKLDYSGIALLIMGSFVPWL. The Extracellular portion of the chain corresponds to 225 to 234; sequence YYSFYCSPQP. A helical transmembrane segment spans residues 235–255; it reads RLIYLSIVCVLGISAIIVAQW. Over 256-264 the chain is Cytoplasmic; the sequence is DRFATPKHR. The chain crosses the membrane as a helical span at residues 265–285; it reads QTRAGVFLGLGLSGVVPTMHF. The Extracellular segment spans residues 286–298; the sequence is TIAEGFVKATTVG. The chain crosses the membrane as a helical span at residues 299-319; sequence QMGWFFLMAVMYITGAGLYAA. The Cytoplasmic portion of the chain corresponds to 320-337; it reads RIPERFFPGKFDIWFQSH. 2 residues coordinate Zn(2+): H337 and H341. Residues 338-358 form a helical membrane-spanning segment; sequence QIFHVLVVAAAFVHFYGVSNL. The Extracellular portion of the chain corresponds to 359–375; it reads QEFRYGLEGGCTDDSLL.

It belongs to the ADIPOR family. In terms of assembly, may form homooligomers and heterooligomers with ADIPOR2. Interacts with APPL2 (via BAR domain); hinders the accessibility of APPL1 to ADIPOR1; negatively regulates adiponectin signaling; ADIPOQ dissociates this interaction and facilitates the recruitment of APPL1 to ADIPOR1. Interacts with APPL1; ADIPOQ enhances this interaction; inhibites adiponectin-stimulated binding of APPL2 to ADIPOR1. Detected in brain and quadriceps muscle (at protein level). Widely expressed. Expressed in heart, kidney, liver, lung, skeletal muscle, white adipose tissue, brown adipose tissue, aorta and spleen. Weakly expressed in brain and testis.

Its subcellular location is the cell membrane. Its function is as follows. Receptor for ADIPOQ, an essential hormone secreted by adipocytes that regulates glucose and lipid metabolism. Required for normal glucose and fat homeostasis and for maintaining a normal body weight. ADIPOQ-binding activates a signaling cascade that leads to increased AMPK activity, and ultimately to increased fatty acid oxidation, increased glucose uptake and decreased gluconeogenesis. Has high affinity for globular adiponectin and low affinity for full-length adiponectin. This chain is Adiponectin receptor protein 1, found in Mus musculus (Mouse).